We begin with the raw amino-acid sequence, 720 residues long: DNA ligase (720 aa).

Residues 57-61 (DAEYD), 106-107 (SL), and E140 each bind NAD(+). K142 (N6-AMP-lysine intermediate) is an active-site residue. Residues R163, E200, K316, and K340 each contribute to the NAD(+) site. 4 residues coordinate Zn(2+): C434, C437, C458, and C464. Residues 643-720 (AAASPVSGKT…TEDEWFELVG (78 aa)) form the BRCT domain.

Belongs to the NAD-dependent DNA ligase family. LigA subfamily. Requires Mg(2+) as cofactor. It depends on Mn(2+) as a cofactor.

The enzyme catalyses NAD(+) + (deoxyribonucleotide)n-3'-hydroxyl + 5'-phospho-(deoxyribonucleotide)m = (deoxyribonucleotide)n+m + AMP + beta-nicotinamide D-nucleotide.. In terms of biological role, DNA ligase that catalyzes the formation of phosphodiester linkages between 5'-phosphoryl and 3'-hydroxyl groups in double-stranded DNA using NAD as a coenzyme and as the energy source for the reaction. It is essential for DNA replication and repair of damaged DNA. The polypeptide is DNA ligase (Xanthobacter autotrophicus (strain ATCC BAA-1158 / Py2)).